A 211-amino-acid chain; its full sequence is MRLRKKWWARPEMEASNLTIINPSLFKGKWKDEFKNDGEIYLELGCGRGKFLCTQALNNKHINYIGIDLKDEVLIYALKKVVEAEAENIRIIPMNISKIENVFDRDEVGRIYINFCNPWPKRRQKKRRLTHTGFLNIYKKFLKPKSEVWFKTDDRGLFEESQEYFVESGFSIDYITYDLHDSGFTDNVVTEYEEKFTNLGMKTMFLIARIV.

The S-adenosyl-L-methionine site is built by glutamate 43, aspartate 68, asparagine 95, and asparagine 117. Residues lysine 121, aspartate 153, and 190–193 contribute to the substrate site; that span reads TEYE.

This sequence belongs to the class I-like SAM-binding methyltransferase superfamily. TrmB family.

It carries out the reaction guanosine(46) in tRNA + S-adenosyl-L-methionine = N(7)-methylguanosine(46) in tRNA + S-adenosyl-L-homocysteine. It functions in the pathway tRNA modification; N(7)-methylguanine-tRNA biosynthesis. Functionally, catalyzes the formation of N(7)-methylguanine at position 46 (m7G46) in tRNA. This Clostridium kluyveri (strain ATCC 8527 / DSM 555 / NBRC 12016 / NCIMB 10680 / K1) protein is tRNA (guanine-N(7)-)-methyltransferase.